The primary structure comprises 360 residues: G-protein coupled receptor 183 (360 aa).

Topologically, residues 1-30 (MDIKMDNFTTPSAASLESDCDLYAHHHTAR) are extracellular. The N-linked (GlcNAc...) asparagine glycan is linked to Asn-7. The helical transmembrane segment at 31–56 (ILMPLHYSIVFIIGLVGNLLALIVII) threads the bilayer. The Cytoplasmic portion of the chain corresponds to 57-76 (QNRKKINSTTLYSTNLVISD). The chain crosses the membrane as a helical span at residues 77-94 (ILFTTALPTRIAYYALGF). Arg-86 contributes to the 7alpha,25-dihydroxycholesterol binding site. Topologically, residues 95–104 (DWRIGDALCR) are extracellular. A disulfide bond links Cys-103 and Cys-180. Residues 105-126 (ITALVFYINTYAGVNFMTCLSI) traverse the membrane as a helical segment. Residues Tyr-111 and Tyr-115 each coordinate 7alpha,25-dihydroxycholesterol. The interval 125–133 (SIDRFFAVV) is interaction with G proteins. The Cytoplasmic portion of the chain corresponds to 127–148 (DRFFAVVHPLRYNKIKRIEHAK). A helical transmembrane segment spans residues 149–167 (CICIFVWILVFGQTLPLLI). Residues 168 to 191 (NPMSKQEAERTTCMEYPNFEETKS) lie on the Extracellular side of the membrane. Residues 192-214 (LPWILLGACFIGYVLPLVIILIC) form a helical membrane-spanning segment. Residues 215-240 (YSQICCKLFKTAKQNPLTEKSGVNKK) lie on the Cytoplasmic side of the membrane. A helical transmembrane segment spans residues 241 to 264 (ALNTIIFIIVVFVVCFTPYHVAII). Tyr-259 contacts 7alpha,25-dihydroxycholesterol. Over 265–286 (QHMIKKLRLPGLLECSQRHSFQ) the chain is Extracellular. The helical transmembrane segment at 287–311 (ISLHFTVCLMNFNCCMDPFIYFFAC) threads the bilayer. Over 312–360 (KGYKRKVMKMLKRQVSVSISSAVRSAPEENSREMTETQMMIHSKSLNGK) the chain is Cytoplasmic. At Ser-327 the chain carries Phosphoserine. The tract at residues 339–360 (EENSREMTETQMMIHSKSLNGK) is disordered. The segment covering 347-360 (ETQMMIHSKSLNGK) has biased composition (polar residues).

The protein belongs to the G-protein coupled receptor 1 family. Homodimer and heterodimer. Heterodimerizes with CXCR5; leading to modulate the interaction between of CXCL13 and CXCR5.

The protein resides in the cell membrane. Its function is as follows. G-protein coupled receptor expressed in lymphocytes that acts as a chemotactic receptor for B-cells, T-cells, splenic dendritic cells, monocytes/macrophages and astrocytes. Receptor for oxysterol 7-alpha,25-dihydroxycholesterol (7-alpha,25-OHC) and other related oxysterols. Mediates cell positioning and movement of a number of cells by binding the 7-alpha,25-OHC ligand that forms a chemotactic gradient. Binding of 7-alpha,25-OHC mediates the correct localization of B-cells during humoral immune responses. Guides B-cell movement along the B-cell zone-T-cell zone boundary and later to interfollicular and outer follicular regions. Its specific expression during B-cell maturation helps position B-cells appropriately for mounting T-dependent antibody responses. Collaborates with CXCR5 to mediate B-cell migration; probably by forming a heterodimer with CXCR5 that affects the interaction between of CXCL13 and CXCR5. Also acts as a chemotactic receptor for some T-cells upon binding to 7-alpha,25-OHC ligand. Promotes follicular helper T (Tfh) cells differentiation by positioning activated T-cells at the follicle-T-zone interface, promoting contact of newly activated CD4 T-cells with activated dendritic cells and exposing them to Tfh-cell-promoting inducible costimulator (ICOS) ligand. Expression in splenic dendritic cells is required for their homeostasis, localization and ability to induce B- and T-cell responses: GPR183 acts as a chemotactic receptor in dendritic cells that mediates the accumulation of CD4(+) dendritic cells in bridging channels. Regulates migration of astrocytes and is involved in communication between astrocytes and macrophages. Promotes osteoclast precursor migration to bone surfaces. Signals constitutively through G(i)-alpha, but not G(s)-alpha or G(q)-alpha. Signals constitutively also via MAPK1/3 (ERK1/2). In Bos taurus (Bovine), this protein is G-protein coupled receptor 183 (GPR183).